We begin with the raw amino-acid sequence, 551 residues long: Nicotianamine aminotransferase B (551 aa).

The disordered stretch occupies residues 24–127 (KSNGHGVAAA…GHAAAAAEEE (104 aa)). The segment covering 86–96 (GHRESNGHAEA) has biased composition (basic and acidic residues). Residues 111 to 123 (AANGESNGHAAAA) are compositionally biased toward low complexity. K379 is modified (N6-(pyridoxal phosphate)lysine).

Belongs to the class-I pyridoxal-phosphate-dependent aminotransferase family. It depends on pyridoxal 5'-phosphate as a cofactor. As to expression, expressed in roots, but not in leaves.

It catalyses the reaction nicotianamine + 2-oxoglutarate = 3''-deamino-3''-oxonicotianamine + L-glutamate. Involved in biosynthesis of mugineic acid family phytosiderophores. The protein is Nicotianamine aminotransferase B of Hordeum vulgare (Barley).